The following is a 109-amino-acid chain: ATP-dependent Clp protease adapter protein ClpS (109 aa).

The tract at residues 1 to 25 (MSERKEGDSGAGVRSAVITQTKPKT) is disordered.

This sequence belongs to the ClpS family. As to quaternary structure, binds to the N-terminal domain of the chaperone ClpA.

In terms of biological role, involved in the modulation of the specificity of the ClpAP-mediated ATP-dependent protein degradation. The polypeptide is ATP-dependent Clp protease adapter protein ClpS (Phenylobacterium zucineum (strain HLK1)).